The sequence spans 486 residues: Aromatic-L-amino-acid decarboxylase (486 aa).

Position 1 is an N-acetylmethionine (M1). 2 tandem repeats follow at residues 58–115 and 118–178. Positions 58–178 are 2 X approximate tandem repeats; it reads QDVEKIIMPG…AASPGLTQGA (121 aa). T82 contacts substrate. Pyridoxal 5'-phosphate is bound by residues A148 and S149. H192 provides a ligand contact to substrate. Residues T246 and N300 each coordinate pyridoxal 5'-phosphate. K303 is subject to N6-(pyridoxal phosphate)lysine.

It belongs to the group II decarboxylase family. In terms of assembly, homodimer. Pyridoxal 5'-phosphate serves as cofactor.

The catalysed reaction is L-dopa + H(+) = dopamine + CO2. It carries out the reaction 5-hydroxy-L-tryptophan + H(+) = serotonin + CO2. Its pathway is catecholamine biosynthesis; dopamine biosynthesis; dopamine from L-tyrosine: step 2/2. Functionally, catalyzes the decarboxylation of L-3,4-dihydroxyphenylalanine (DOPA) to dopamine and L-5-hydroxytryptophan to serotonin. The protein is Aromatic-L-amino-acid decarboxylase (DDC) of Sus scrofa (Pig).